Reading from the N-terminus, the 1111-residue chain is Myosin IB heavy chain (1111 aa).

Residues 9-691 (QGTDDLVMLP…TVFLLEEALD (683 aa)) form the Myosin motor domain. An ATP-binding site is contributed by 102–109 (GESGAGKT). A Phosphoserine modification is found at S332. Residues 547–627 (GSLQKKRPTT…GFAYRNTFDK (81 aa)) form an actin-binding region. In terms of domain architecture, TH1 spans 729–913 (KERQRNSIDR…KGLIGTIASG (185 aa)). The tract at residues 910–1058 (IASGLPSSTD…PAPQPSRPTA (149 aa)) is disordered. Polar residues predominate over residues 914–928 (LPSSTDSTPKNYNPN). 3 stretches are compositionally biased toward low complexity: residues 929-944 (SMSQASSRPAPQQSAG), 952-967 (GAGQPQPQQPQQQQRP), and 991-1012 (PMGAPQQGGAPQQGAGRQLPQP). Over residues 1017–1040 (GAPGGRGAPMGRGAPGGGPAGAGG) the composition is skewed to gly residues. The SH3 domain occupies 1053–1111 (PSRPTAKALYDYDASSTDELSFKEGDIIFIVQKDNGGWTQGELKSGQKGWAPTNYLQYN).

Belongs to the TRAFAC class myosin-kinesin ATPase superfamily. Myosin family. Myosin I heavy chain is single-headed. Dimer of a heavy and a light chain. Inability to self-assemble into filaments.

It is found in the cell projection. It localises to the pseudopodium. The protein localises to the cytoplasm. The protein resides in the cell cortex. Functionally, myosin is a protein that binds to actin and has ATPase activity that is activated by actin. Myosin IB may have a role in chemotaxis and aggregation; it could serve to stabilize and even retract cortical structures, such as pseudopods and lamellopods. Involved in the whole cell motility of aggregation-stages cells. Overexpression results in significant decrease in the rate of cellular translocation and fluid-phase pinocytosis and abnormalities in the normal rearrangement of the actin cytoskeleton. The protein is Myosin IB heavy chain (myoB) of Dictyostelium discoideum (Social amoeba).